The chain runs to 267 residues: Low affinity immunoglobulin gamma Fc region receptor III (267 aa).

The signal sequence occupies residues 1–36 (MTLETQMFQNAHSGSQWLLPPLTMLLLFAFADRQTA). Residues 37-221 (NLPKAVVKRD…STSSLVWFHA (185 aa)) lie on the Extracellular side of the membrane. 2 Ig-like C2-type domains span residues 39–121 (PKAV…EVIS) and 122–204 (DWLL…VTIT). 2 disulfide bridges follow: Cys62-Cys104 and Cys143-Cys187. 5 N-linked (GlcNAc...) asparagine glycosylation sites follow: Asn70, Asn78, Asn97, Asn171, and Asn178. A helical membrane pass occupies residues 222 to 241 (AFCLVMCLLFAVDTGLYFCV). Topologically, residues 242-267 (RRNLQTSGEDWRKSLSVGKYKAPQDK) are cytoplasmic.

As to quaternary structure, may form multisubunit complex with other heteroproteins. This association is required for efficient cell-surface expression. Does not associate with CD3 zeta. As to expression, expressed on natural killer cells and macrophages.

It is found in the cell membrane. Its function is as follows. Receptor for the Fc region of complexed immunoglobulins gamma. Low affinity receptor which binds to IgG1, IgG2a and IgG2b. Mediates neutrophil activation by IgG complexes redundantly with Fcgr4. In Rattus norvegicus (Rat), this protein is Low affinity immunoglobulin gamma Fc region receptor III (Fcgr3).